Here is a 687-residue protein sequence, read N- to C-terminus: POZ-, AT hook-, and zinc finger-containing protein 1 (687 aa).

The region spanning 41–130 (CDVLLRVGDE…AYTSRIVVRL (90 aa)) is the BTB domain. Lys112 participates in a covalent cross-link: Glycyl lysine isopeptide (Lys-Gly) (interchain with G-Cter in SUMO2). Residues 250–260 (PFPSVASSAPP) show a composition bias toward low complexity. The tract at residues 250–278 (PFPSVASSAPPLTGKRGRGRPRKANLLDS) is disordered. Positions 264 to 276 (KRGRGRPRKANLL) form a DNA-binding region, a.T hook. A Glycyl lysine isopeptide (Lys-Gly) (interchain with G-Cter in SUMO2) cross-link involves residue Lys272. Residue Ser282 is modified to Phosphoserine. The C2H2-type 1 zinc finger occupies 292-314 (LPCGLCGKVFTDANRLRQHEAQH). A disordered region spans residues 332–351 (GENGLPISEDPDGPRKRSRT). 5 consecutive C2H2-type zinc fingers follow at residues 355–377 (VACEICGKIFRDVYHLNRHKLSH), 383–405 (YSCPVCGLRFKRKDRMSYHVRSH), 413–436 (YICQSCGKGFSRPDHLNGHIKQVH), 442–464 (HKCQTCNASFATRDRLRSHLACH), and 495–518 (NFCSICNRGFSSASYLKVHVKTHH). Residues 549 to 558 (EGQKCSHQDP) are compositionally biased toward basic and acidic residues. Residues 549–603 (EGQKCSHQDPIESSDSYGDLSDASDLKTPEKQSANGSFSCDMAVPKNKMESDGEK) form a disordered region. The segment at 605 to 628 (YPCPECGSFFRSKSYLNKHIQKVH) adopts a C2H2-type 7 zinc-finger fold.

It belongs to the krueppel C2H2-type zinc-finger protein family. Homodimer. Interacts with RNF4. Interacts (via C-terminus) with TP53; this interaction inhibits TP53 ability to activate transcription. In terms of tissue distribution, ubiquitous.

It localises to the nucleus. Functionally, transcriptional regulator that plays a role in many biological processes such as embryogenesis, senescence, T-cell development or neurogenesis. Interacts with the TP53 protein to control genes that are important in proliferation and in the DNA-damage response. Mechanistically, the interaction inhibits the DNA binding and transcriptional activity of TP53/p53. Part of the transcriptional network modulating regulatory T-cell development and controls the generation of the regulatory T-cell pool under homeostatic conditions. (Microbial infection) Plays a positive role in viral cDNA synthesis. The sequence is that of POZ-, AT hook-, and zinc finger-containing protein 1 (PATZ1) from Homo sapiens (Human).